A 594-amino-acid polypeptide reads, in one-letter code: MAAAGGGWAAACEKFRSARTLSAVESRKDPETEPYRSKYSARALLQEVKQQLSAAEDCGEARLLAVRRAVLEYELGVNHTDTEELSAGEEHLQRCTQLLEPHRLSRDCVSLYIQAQNNLGILWSERDEIKTAQTYLESAEALYNQYMKEDGNPPLDPSEHFMAEEEKLTDQERSKRFEKAYTHTLYYLAQVYQHLEMIEKAAQYCHTTLKRQLEYCGYYPVEWALNAATLSQYYLSKQCFMESRHCLAAASVIFSQAGQVPSTEDNETEQDQQDLRQRKAEIARCWIKYCLNLLQSARKLLEDNIGELDPDRQLELKAQRKKEEDEKENGRKKAVLFGTSDICDSVLAMEEKVSSVYPLDFQEAREIFLVGQNYVQEAKEFFQVDGYVTDHIEIVQDHSALFKVLAFFEEDYERRCKMHKRRIDMLEPIYADLNPQYYLLISRQLQFELADTYYEMMDLKVAIGNRLEELDSHTIKKINSLAQLAIKYYELFLDSLRNPDKVFPEELEEDVLRPAMVAKFHIARLYGKLITSDSKKQLENMQTSLEYYTFLVDYCEKHPDAVRAVETELELSKEMVGLLPTRMERLRAKLCPFI.

This sequence belongs to the KIF-binding protein family.

It is found in the cytoplasm. The protein resides in the cytoskeleton. Its function is as follows. Activator of KIF1B plus-end-directed microtubule motor activity. Required for organization of axonal microtubules, and axonal outgrowth and maintenance during peripheral and central nervous system development. This is KIF-binding protein (Kifbp) from Gallus gallus (Chicken).